We begin with the raw amino-acid sequence, 450 residues long: Tubulin alpha-6 chain (450 aa).

GTP is bound by residues Gln11, Glu71, Gly144, Thr145, Thr179, Asn206, and Asn228. Glu71 lines the Mg(2+) pocket. Glu254 is a catalytic residue. Residue Thr349 is modified to Phosphothreonine. Residues 430–450 (KDYEEVGAEGGDDEDDEGEEY) form a disordered region. Positions 431-450 (DYEEVGAEGGDDEDDEGEEY) are enriched in acidic residues.

It belongs to the tubulin family. Dimer of alpha and beta chains. A typical microtubule is a hollow water-filled tube with an outer diameter of 25 nm and an inner diameter of 15 nM. Alpha-beta heterodimers associate head-to-tail to form protofilaments running lengthwise along the microtubule wall with the beta-tubulin subunit facing the microtubule plus end conferring a structural polarity. Microtubules usually have 13 protofilaments but different protofilament numbers can be found in some organisms and specialized cells. Interacts with TFCB. Requires Mg(2+) as cofactor. Post-translationally, undergoes a tyrosination/detyrosination cycle, the cyclic removal and re-addition of a C-terminal tyrosine residue by the enzymes tubulin tyrosine carboxypeptidase (TTCP) and tubulin tyrosine ligase (TTL), respectively. Acetylation of alpha chains at Lys-40 stabilizes microtubules and affects affinity and processivity of microtubule motors. This modification has a role in multiple cellular functions, ranging from cell motility, cell cycle progression or cell differentiation to intracellular trafficking and signaling.

The protein localises to the cytoplasm. Its subcellular location is the cytoskeleton. The enzyme catalyses GTP + H2O = GDP + phosphate + H(+). Its function is as follows. Tubulin is the major constituent of microtubules, a cylinder consisting of laterally associated linear protofilaments composed of alpha- and beta-tubulin heterodimers. Microtubules grow by the addition of GTP-tubulin dimers to the microtubule end, where a stabilizing cap forms. Below the cap, tubulin dimers are in GDP-bound state, owing to GTPase activity of alpha-tubulin. The polypeptide is Tubulin alpha-6 chain (TUBA6) (Arabidopsis thaliana (Mouse-ear cress)).